The following is a 137-amino-acid chain: NADH-quinone oxidoreductase subunit A 1 (137 aa).

3 helical membrane passes run 14 to 34 (FAAFLLGVVGLLAFMLGVSAL), 66 to 86 (FYLVAMLFVIFDVEALFLFAW), and 95 to 115 (WAGLIEATIFIAILLAGLVYL).

Belongs to the complex I subunit 3 family. NDH-1 is composed of 13 different subunits. Subunits NuoA, H, J, K, L, M, N constitute the membrane sector of the complex.

Its subcellular location is the cell inner membrane. The enzyme catalyses a quinone + NADH + 5 H(+)(in) = a quinol + NAD(+) + 4 H(+)(out). Its function is as follows. NDH-1 shuttles electrons from NADH, via FMN and iron-sulfur (Fe-S) centers, to quinones in the respiratory chain. The immediate electron acceptor for the enzyme in this species is believed to be ubiquinone. Couples the redox reaction to proton translocation (for every two electrons transferred, four hydrogen ions are translocated across the cytoplasmic membrane), and thus conserves the redox energy in a proton gradient. The sequence is that of NADH-quinone oxidoreductase subunit A 1 from Pseudomonas paraeruginosa (strain DSM 24068 / PA7) (Pseudomonas aeruginosa (strain PA7)).